The following is a 325-amino-acid chain: Pyruvate dehydrogenase E1 component subunit beta (325 aa).

Position 60 (E60) interacts with thiamine diphosphate.

Heterodimer of an alpha and a beta chain. Thiamine diphosphate is required as a cofactor.

It carries out the reaction N(6)-[(R)-lipoyl]-L-lysyl-[protein] + pyruvate + H(+) = N(6)-[(R)-S(8)-acetyldihydrolipoyl]-L-lysyl-[protein] + CO2. The pyruvate dehydrogenase complex catalyzes the overall conversion of pyruvate to acetyl-CoA and CO(2). It contains multiple copies of three enzymatic components: pyruvate dehydrogenase (E1), dihydrolipoamide acetyltransferase (E2) and lipoamide dehydrogenase (E3). In Geobacillus stearothermophilus (Bacillus stearothermophilus), this protein is Pyruvate dehydrogenase E1 component subunit beta (pdhB).